We begin with the raw amino-acid sequence, 313 residues long: UDP-N-acetylenolpyruvoylglucosamine reductase (313 aa).

In terms of domain architecture, FAD-binding PCMH-type spans 31-207 (VGGPADALVA…TGVDLGLGFD (177 aa)). The active site involves Arg-180. Catalysis depends on Cys-236, which acts as the Proton donor. Residue Glu-307 is part of the active site.

Belongs to the MurB family. FAD serves as cofactor.

Its subcellular location is the cytoplasm. The enzyme catalyses UDP-N-acetyl-alpha-D-muramate + NADP(+) = UDP-N-acetyl-3-O-(1-carboxyvinyl)-alpha-D-glucosamine + NADPH + H(+). Its pathway is cell wall biogenesis; peptidoglycan biosynthesis. Cell wall formation. The chain is UDP-N-acetylenolpyruvoylglucosamine reductase from Desulfosudis oleivorans (strain DSM 6200 / JCM 39069 / Hxd3) (Desulfococcus oleovorans).